Here is a 771-residue protein sequence, read N- to C-terminus: Glucocorticoid receptor (771 aa).

The interval 1–415 is modulating; it reads MDLKESVTSS…STTTGPPPKL (415 aa). Thr8 is subject to Phosphothreonine. An Omega-N-methylarginine modification is found at Arg22. Phosphoserine occurs at positions 44, 133, 199, 207, and 222. Over residues 129-172 the composition is skewed to polar residues; sequence SRSTSVPENPKNSASAVSGTPTEEFPKTQSDLSSEQENLKSQAG. The segment at 129-184 is disordered; that stretch reads SRSTSVPENPKNSASAVSGTPTEEFPKTQSDLSSEQENLKSQAGTNGGNVKFPPDQ. Residue Lys254 forms a Glycyl lysine isopeptide (Lys-Gly) (interchain with G-Cter in SUMO2) linkage. A Phosphoserine modification is found at Ser263. Glycyl lysine isopeptide (Lys-Gly) (interchain with G-Cter in SUMO); alternate cross-links involve residues Lys273 and Lys289. Residues Lys273 and Lys289 each participate in a glycyl lysine isopeptide (Lys-Gly) (interchain with G-Cter in SUMO2); alternate cross-link. Residues Ser303 and Ser400 each carry the phosphoserine modification. Residues 390–411 are disordered; it reads SSPGLRPDVSSPPSSSSTTTGP. The span at 400-409 shows a compositional bias: low complexity; the sequence is SPPSSSSTTT. Lys414 participates in a covalent cross-link: Glycyl lysine isopeptide (Lys-Gly) (interchain with G-Cter in ubiquitin). NR C4-type zinc fingers lie at residues 416-436 and 452-476; these read CLVC…CGSC and CAGR…YRKC. The segment at residues 416 to 481 is a DNA-binding region (nuclear receptor); sequence CLVCSDELSG…RYRKCLQAGM (66 aa). N6-acetyllysine is present on residues Lys475, Lys487, Lys489, and Lys490. The interval 480–771 is interaction with CLOCK; the sequence is GMNLQARKTK…DIKKLLFHQK (292 aa). A hinge region spans residues 482-517; sequence NLQARKTKKKIKGIQQATTGVSQNTSENPNKTIVPA. The region spanning 518–752 is the NR LBD domain; that stretch reads TLPQLTPTLV…FPEMLAEIIT (235 aa). An interaction with CRY1 region spans residues 526-691; the sequence is LVSLLEVIEP…EIRMTYIKEL (166 aa). Lys697 participates in a covalent cross-link: Glycyl lysine isopeptide (Lys-Gly) (interchain with G-Cter in SUMO).

It belongs to the nuclear hormone receptor family. NR3 subfamily. In terms of assembly, heteromultimeric cytoplasmic complex with HSP90AA1, HSPA1A/HSPA1B, and FKBP5 or another immunophilin such as PPID, STIP1, or the immunophilin homolog PPP5C. Upon ligand binding FKBP5 dissociates from the complex and FKBP4 takes its place, thereby linking the complex to dynein and mediating transport to the nucleus, where the complex dissociates. Probably forms a complex composed of chaperones HSP90 and HSP70, co-chaperones CDC37, PPP5C, TSC1 and client protein TSC2, CDK4, AKT, RAF1 and NR3C1; this complex does not contain co-chaperones STIP1/HOP and PTGES3/p23. Directly interacts with UNC45A. Binds to DNA as a homodimer, and as heterodimer with NR3C2 or the retinoid X receptor. Binds STAT5A and STAT5B homodimers and heterodimers. Interacts with NRIP1, POU2F1, POU2F2 and TRIM28. Interacts with several coactivator complexes, including the SMARCA4 complex, CREBBP/EP300, TADA2L (Ada complex) and p160 coactivators such as NCOA2 and NCOA6. Interaction with BAG1 inhibits transactivation. Interacts with HEXIM1 and TGFB1I1. Interacts with NCOA1. Interacts with NCOA3, SMARCA4, SMARCC1, SMARCD1, and SMARCE1. Interacts with CLOCK, CRY1 and CRY2 in a ligand-dependent fashion. Interacts with CIART. Interacts with RWDD3. Interacts with UBE2I/UBC9 and this interaction is enhanced in the presence of RWDD3. Interacts with GRIP1. Interacts with NR4A3 (via nuclear receptor DNA-binding domain), represses transcription activity of NR4A3 on the POMC promoter Nur response element (NurRE). Directly interacts with PNRC2 to attract and form a complex with UPF1 and DCP1A; the interaction leads to rapid mRNA degradation. Interacts with GSK3B. Interacts with FNIP1 and FNIP2. Interacts (via C-terminus) with HNRNPU (via C-terminus). Interacts with MCM3AP. Interacts (via domain NR LBD) with HSP90AA1 and HSP90AB1. In the absence of hormonal ligand, interacts with TACC1. Interacts (via NR LBD domain) with ZNF764 (via KRAB domain); the interaction regulates transcription factor activity of NR3C1 by directing its actions toward certain biologic pathways. In terms of processing, acetylation by CLOCK reduces its binding to glucocorticoid response elements and its transcriptional activity. Post-translationally, increased proteasome-mediated degradation in response to glucocorticoids. Phosphorylated in the absence of hormone; becomes hyperphosphorylated in the presence of glucocorticoid. The Ser-199, Ser-222 and Ser-400-phosphorylated forms are mainly cytoplasmic, and the Ser-207-phosphorylated form is nuclear. Phosphorylation at Ser-207 increases transcriptional activity. Phosphorylation at Ser-199, Ser-222 and Ser-400 decreases signaling capacity. Phosphorylation at Ser-400 may protect from glucocorticoid-induced apoptosis. Phosphorylation at Ser-199 and Ser-207 is not required in regulation of chromosome segregation. May be dephosphorylated by PPP5C, attenuates NR3C1 action. In terms of processing, ubiquitinated by UBR5, leading to its degradation: UBR5 specifically recognizes and binds ligand-bound NR3C1 when it is not associated with coactivators (NCOAs). In presence of NCOAs, the UBR5-degron is not accessible, preventing its ubiquitination and degradation. Post-translationally, sumoylation at Lys-273 and Lys-289 negatively regulates its transcriptional activity. Sumoylation at Lys-697 positively regulates its transcriptional activity in the presence of RWDD3. Sumoylation at Lys-273 and Lys-289 is dispensable whereas sumoylation at Lys-697 is critical for the stimulatory effect of RWDD3 on its transcriptional activity. Heat shock increases sumoylation in a RWDD3-dependent manner.

The protein resides in the cytoplasm. Its subcellular location is the nucleus. It is found in the mitochondrion. It localises to the cytoskeleton. The protein localises to the spindle. The protein resides in the microtubule organizing center. Its subcellular location is the centrosome. It is found in the chromosome. It localises to the nucleoplasm. Receptor for glucocorticoids (GC). Has a dual mode of action: as a transcription factor that binds to glucocorticoid response elements (GRE), both for nuclear and mitochondrial DNA, and as a modulator of other transcription factors. Affects inflammatory responses, cellular proliferation and differentiation in target tissues. Involved in chromatin remodeling. Plays a role in rapid mRNA degradation by binding to the 5' UTR of target mRNAs and interacting with PNRC2 in a ligand-dependent manner which recruits the RNA helicase UPF1 and the mRNA-decapping enzyme DCP1A, leading to RNA decay. Could act as a coactivator for STAT5-dependent transcription upon growth hormone (GH) stimulation and could reveal an essential role of hepatic GR in the control of body growth. Mediates glucocorticoid-induced apoptosis. Promotes accurate chromosome segregation during mitosis. May act as a tumor suppressor. May play a negative role in adipogenesis through the regulation of lipolytic and antilipogenic gene expression. This Cavia porcellus (Guinea pig) protein is Glucocorticoid receptor (NR3C1).